Consider the following 122-residue polypeptide: Large ribosomal subunit protein uL14 (122 aa).

It belongs to the universal ribosomal protein uL14 family. Part of the 50S ribosomal subunit. Forms a cluster with proteins L3 and L19. In the 70S ribosome, L14 and L19 interact and together make contacts with the 16S rRNA in bridges B5 and B8.

Functionally, binds to 23S rRNA. Forms part of two intersubunit bridges in the 70S ribosome. The polypeptide is Large ribosomal subunit protein uL14 (Micrococcus luteus (Micrococcus lysodeikticus)).